We begin with the raw amino-acid sequence, 294 residues long: Flavin-dependent thymidylate synthase (294 aa).

The region spanning 27 to 250 (GFIRVIDYMG…PFVYEAFEEY (224 aa)) is the ThyX domain. Residues threonine 73, 96-98 (RHR), and glutamate 104 contribute to the FAD site. DUMP is bound by residues 93–96 (QWIR), 104–108 (EYSAR), and arginine 189. The short motif at 96-106 (RHRTASVNEYS) is the ThyX motif element. FAD-binding positions include 205–207 (NLH) and histidine 211. Arginine 216 contributes to the dUMP binding site. The active-site Involved in ionization of N3 of dUMP, leading to its activation is arginine 216.

It belongs to the thymidylate synthase ThyX family. As to quaternary structure, homotetramer. It depends on FAD as a cofactor.

The enzyme catalyses dUMP + (6R)-5,10-methylene-5,6,7,8-tetrahydrofolate + NADPH + H(+) = dTMP + (6S)-5,6,7,8-tetrahydrofolate + NADP(+). The protein operates within pyrimidine metabolism; dTTP biosynthesis. Catalyzes the reductive methylation of 2'-deoxyuridine-5'-monophosphate (dUMP) to 2'-deoxythymidine-5'-monophosphate (dTMP) while utilizing 5,10-methylenetetrahydrofolate (mTHF) as the methyl donor, and NADPH and FADH(2) as the reductant. In Rickettsia conorii (strain ATCC VR-613 / Malish 7), this protein is Flavin-dependent thymidylate synthase.